Here is a 301-residue protein sequence, read N- to C-terminus: Ribosomal RNA small subunit methyltransferase A (301 aa).

S-adenosyl-L-methionine contacts are provided by Asn23, Ile25, Gly50, Glu72, Asp97, and Asn149.

Belongs to the class I-like SAM-binding methyltransferase superfamily. rRNA adenine N(6)-methyltransferase family. RsmA subfamily.

Its subcellular location is the cytoplasm. The enzyme catalyses adenosine(1518)/adenosine(1519) in 16S rRNA + 4 S-adenosyl-L-methionine = N(6)-dimethyladenosine(1518)/N(6)-dimethyladenosine(1519) in 16S rRNA + 4 S-adenosyl-L-homocysteine + 4 H(+). Functionally, specifically dimethylates two adjacent adenosines (A1518 and A1519) in the loop of a conserved hairpin near the 3'-end of 16S rRNA in the 30S particle. May play a critical role in biogenesis of 30S subunits. The chain is Ribosomal RNA small subunit methyltransferase A from Rickettsia peacockii (strain Rustic).